Here is a 248-residue protein sequence, read N- to C-terminus: tRNA (guanine-N(1)-)-methyltransferase (248 aa).

S-adenosyl-L-methionine-binding positions include Gly113 and 133–138 (LGDFVL).

It belongs to the RNA methyltransferase TrmD family. In terms of assembly, homodimer.

Its subcellular location is the cytoplasm. It carries out the reaction guanosine(37) in tRNA + S-adenosyl-L-methionine = N(1)-methylguanosine(37) in tRNA + S-adenosyl-L-homocysteine + H(+). Functionally, specifically methylates guanosine-37 in various tRNAs. This Albidiferax ferrireducens (strain ATCC BAA-621 / DSM 15236 / T118) (Rhodoferax ferrireducens) protein is tRNA (guanine-N(1)-)-methyltransferase.